Consider the following 557-residue polypeptide: MPSDIEIARAATLKPIAQVAEKLGIPDEALHNYGKHIAKIDHDFIASLEGKPEGKLVLVTAISPTPAGEGKTTTTVGLGDALNRIGKRAVMCLREPSLGPCFGMKGGAAGGGKAQVVPMEQINLHFTGDFHAITSAHSLAAALIDNHIYWANELNIDVRRIHWRRVVDMNDRALRAINQSLGGVANGFPREDGFDITVASEVMAVFCLAKNLADLEERLGRIVIAETRDRKPVTLADVKATGAMTVLLKDALQPNLVQTLEGNPALIHGGPFANIAHGCNSVIATRTGLRLADYTVTEAGFGADLGAEKFIDIKCRQTGLKPSSVVIVATIRALKMHGGVNKKDLQAENLDALEKGFANLERHVNNVRSFGLPVVVGVNHFFQDTDAEHARLKELCRDRLQVEAITCKHWAEGGAGAEALAQAVVKLAEGEQKPLTFAYETETKITDKIKAIATKLYGAADIQIESKAATKLAGFEKDGYGKLPVCMAKTQYSFSTDPTLMGAPSGHLVSVRDVRLSAGAGFVVVICGEIMTMPGLPKVPAADTIRLDANGQIDGLF.

Residue 65 to 72 (TPAGEGKT) coordinates ATP.

Belongs to the formate--tetrahydrofolate ligase family.

The enzyme catalyses (6S)-5,6,7,8-tetrahydrofolate + formate + ATP = (6R)-10-formyltetrahydrofolate + ADP + phosphate. It participates in one-carbon metabolism; tetrahydrofolate interconversion. The polypeptide is Formate--tetrahydrofolate ligase (Methylorubrum extorquens (strain CM4 / NCIMB 13688) (Methylobacterium extorquens)).